Reading from the N-terminus, the 737-residue chain is Catalase-peroxidase (737 aa).

The segment at 1 to 33 (MPEATEHPPIGEAQTEPAQSGCPMVIKPPVEGG) is disordered. The tryptophyl-tyrosyl-methioninium (Trp-Tyr) (with M-261) cross-link spans 107-235 (WHAAGTYRVQ…LGASHMGLIY (129 aa)). His-108 acts as the Proton acceptor in catalysis. Positions 235–261 (YVNPEGPEGNPDPIAAAIDIRETFGRM) form a cross-link, tryptophyl-tyrosyl-methioninium (Tyr-Met) (with W-107). Residue His-276 participates in heme binding.

This sequence belongs to the peroxidase family. Peroxidase/catalase subfamily. As to quaternary structure, homodimer or homotetramer. Heme b is required as a cofactor. Post-translationally, formation of the three residue Trp-Tyr-Met cross-link is important for the catalase, but not the peroxidase activity of the enzyme.

It catalyses the reaction H2O2 + AH2 = A + 2 H2O. The enzyme catalyses 2 H2O2 = O2 + 2 H2O. Its function is as follows. Bifunctional enzyme with both catalase and broad-spectrum peroxidase activity. May play a role in polycyclic aromatic hydrocarbon (PAH) metabolism. This chain is Catalase-peroxidase, found in Mycolicibacterium vanbaalenii (Mycobacterium vanbaalenii).